A 1060-amino-acid chain; its full sequence is RNA-binding protein 27 (1060 aa).

Disordered stretches follow at residues 80–143, 160–278, and 319–416; these read PLEP…DGKW, YDWR…PKRR, and PPPG…PPPL. Composition is skewed to basic and acidic residues over residues 84 to 102 and 124 to 143; these read VKPE…KEEV and SRSE…DGKW. Basic residues predominate over residues 165–185; the sequence is GRSKSRSKSRGLSRSRSRSRG. Positions 186 to 211 are enriched in basic and acidic residues; sequence RSKDRDPNRNVEHRERSKFKSERNDL. 2 stretches are compositionally biased toward low complexity: residues 225-235 and 255-268; these read SSEQYSSGAQS and SWSN…SSNS. A C3H1-type zinc finger spans residues 273–301; it reads PPPKRRCRDYDERGFCVLGDLCQFDHGND. Pro residues-rich tracts occupy residues 319–356 and 371–384; these read PPPG…PGPG and QPPP…PRPP. A compositionally biased stretch (polar residues) spans 387–402; sequence QSSLINSRDQPGTSAV. Phosphothreonine is present on Thr-447. At Arg-455 the chain carries Omega-N-methylarginine. The disordered stretch occupies residues 572-594; the sequence is LTKKPWLGKQGNNNQSKPGFLRK. An RRM domain is found at 600–674; that stretch reads TKLEVKKIPQ…RFIRVLWHRE (75 aa). The interval 754–775 is disordered; that stretch reads HASTNQSDTSHLLNQTGGSSGE. Residues 755-770 are compositionally biased toward polar residues; sequence ASTNQSDTSHLLNQTG. Residues 810-887 are a coiled coil; it reads VQEVLKKKQE…KDELKTSSTV (78 aa). Ser-928 bears the Phosphoserine mark. The segment at 943-982 is disordered; the sequence is GRGKTISSQGRGRGRGRGRGRGSLNHMVVDHRPKALPGGG. Ser-1012 and Ser-1020 each carry phosphoserine. Residues 1014 to 1060 are disordered; that stretch reads HKPKVPSISTETEEEEVKEEETETSDLFLHDDDDEDEDEYESRSWRR. Composition is skewed to acidic residues over residues 1024–1037 and 1044–1053; these read ETEE…ETET and DDDDEDEDEY.

The protein localises to the cytoplasm. The protein resides in the nucleus speckle. May be involved in the turnover of nuclear polyadenylated (pA+) RNA. This Mus musculus (Mouse) protein is RNA-binding protein 27.